A 127-amino-acid chain; its full sequence is uncharacterized protein (127 aa).

Residues 1–13 (MEAGNRSGTPQHR) show a composition bias toward polar residues. Residues 1–26 (MEAGNRSGTPQHRQLSEIRQDLSSSP) are disordered.

This is an uncharacterized protein from Saccharomyces cerevisiae (strain ATCC 204508 / S288c) (Baker's yeast).